A 365-amino-acid chain; its full sequence is Outer capsid protein sigma-3 (365 aa).

Residues 51-73 (CMHCLGVVGSLQRKLKHLPHHRC) form a CCHC-type zinc finger.

Belongs to the orthoreovirus sigma-3 protein family. In terms of assembly, heterohexamer of three sigma-3 and three Mu-1 proteins. The RNA-binding form is probably a homodimer. In terms of processing, cleaved during virus the endosomal proteolytic disassembly of the outer capsid.

The protein resides in the virion. In terms of biological role, stimulates translation by blocking the activation of the dsRNA-dependent protein kinase EIF2AK2/PKR, thereby inhibiting the host interferon response. Sigma3 prevents the activation of EIF2AK2 by competing with the kinase for dsRNA-binding. The viral outer shell polypeptides, of which sigma-3 is one, impose structural constraints that prevent elongation of nascent transcripts by the RNA-dependent RNA polymerase lambda-3. The chain is Outer capsid protein sigma-3 (S4) from Mammalia (T1L).